The sequence spans 841 residues: pre-rRNA 2'-O-ribose RNA methyltransferase FTSJ3 (841 aa).

S-adenosyl-L-methionine is bound by residues Gly-56, Trp-58, Asp-76, Asp-92, and Asp-117. The Proton acceptor role is filled by Lys-157. The disordered stretch occupies residues 332–366 (ISLSSGEEDEGNEEDSTAGTTEQPSKEEEEEEQLN). Residues Ser-333, Ser-335, Ser-336, Ser-347, and Ser-356 each carry the phosphoserine modification. The segment covering 337–347 (GEEDEGNEEDS) has biased composition (acidic residues). Residues 356–404 (SKEEEEEEQLNQTLAEMKAQEVAELKRKKKKLLREQRKQRERVELKMDL) are a coiled coil. Lys-357 participates in a covalent cross-link: Glycyl lysine isopeptide (Lys-Gly) (interchain with G-Cter in SUMO2). Arg-389 carries the post-translational modification Citrulline. Residues 454 to 482 (VSDVEDDGDDTSLDSDLDPEELAGVRGHQ) are disordered. Residues 456 to 474 (DVEDDGDDTSLDSDLDPEE) show a composition bias toward acidic residues. Ser-547 is subject to Phosphoserine. Thr-567 is subject to Phosphothreonine. A Glycyl lysine isopeptide (Lys-Gly) (interchain with G-Cter in SUMO2) cross-link involves residue Lys-573. Position 578 is a phosphoserine (Ser-578). Residues 579 to 654 (PLYQDEAPKG…IVPIEDPAKH (76 aa)) form a disordered region. Lys-637 participates in a covalent cross-link: Glycyl lysine isopeptide (Lys-Gly) (interchain with G-Cter in SUMO2). Ser-638 carries the phosphoserine modification. A Glycyl lysine isopeptide (Lys-Gly) (interchain with G-Cter in SUMO2) cross-link involves residue Lys-653. The residue at position 670 (Ser-670) is a Phosphoserine. Lys-672 is covalently cross-linked (Glycyl lysine isopeptide (Lys-Gly) (interchain with G-Cter in SUMO2)). At Ser-682 the chain carries Phosphoserine. Lys-704 participates in a covalent cross-link: Glycyl lysine isopeptide (Lys-Gly) (interchain with G-Cter in SUMO2). Positions 733–771 (IKKVAEAKARKKRRMLKRLEQTRKKAEAVVNTVDISERE) form a coiled coil. Arg-777 is subject to Citrulline. Residues 805 to 815 (VRRPAGVRGHF) show a composition bias toward basic residues. Positions 805–841 (VRRPAGVRGHFKVVDSRMKKDQRAQQRKEQKKKHKRK) are disordered. Positions 816-832 (KVVDSRMKKDQRAQQRK) are enriched in basic and acidic residues.

The protein belongs to the class I-like SAM-binding methyltransferase superfamily. RNA methyltransferase RlmE family. SPB1 subfamily. As to quaternary structure, interacts with NIP7. In terms of processing, citrullinated by PADI4.

It is found in the nucleus. The protein resides in the nucleolus. The enzyme catalyses a ribonucleotide in rRNA + S-adenosyl-L-methionine = a 2'-O-methylribonucleotide in rRNA + S-adenosyl-L-homocysteine + H(+). RNA 2'-O-methyltransferase involved in the processing of the 34S pre-rRNA to 18S rRNA and in 40S ribosomal subunit formation. The polypeptide is pre-rRNA 2'-O-ribose RNA methyltransferase FTSJ3 (Pongo abelii (Sumatran orangutan)).